A 792-amino-acid polypeptide reads, in one-letter code: Ribosome biogenesis protein BOP1 homolog (792 aa).

The span at 1 to 11 (MTKKRTVKRKV) shows a compositional bias: basic residues. The segment at 1-167 (MTKKRTVKRK…ESDTSDEEDI (167 aa)) is disordered. Acidic residues-rich tracts occupy residues 44–53 (EDTTDDEGID), 60–72 (SSED…DEEG), 82–117 (EAEE…ESDA), and 157–166 (EESDTSDEED). WD repeat units lie at residues 453–494 (GHTD…RTIE), 496–534 (NDVV…KLLI), 578–620 (THFK…SQIP), 623–661 (KSKG…LIKK), 664–703 (TNSK…KPYQ), 707–746 (LHRN…DLLQ), and 762–792 (RDEF…RLYT).

It belongs to the WD repeat BOP1/ERB1 family.

The protein resides in the nucleus. The protein localises to the nucleolus. Its subcellular location is the nucleoplasm. Functionally, required for maturation of ribosomal RNAs and formation of the large ribosomal subunit. The chain is Ribosome biogenesis protein BOP1 homolog from Drosophila mojavensis (Fruit fly).